The sequence spans 285 residues: Nurim (285 aa).

Over 1–16 (MSANVQVSGQLSSGPS) the chain is Nuclear. A helical transmembrane segment spans residues 17–44 (LPACIVLSAVSLLCFVAGFGTGAEFVRF). Topologically, residues 45–74 (LSFGAIFRNISGGLDGEIPLTWSEAIRNTQ) are perinuclear space. A helical transmembrane segment spans residues 75–96 (FQCCIGIDIGLLFLFVLQHSLM). At 97–113 (AWTAVKKNVLHVFGVLQ) the chain is on the nuclear side. The helical transmembrane segment at 114–130 (RSIYILCTALSLQVLMR) threads the bilayer. The Perinuclear space segment spans residues 131–149 (FWQPCPHGPYLWNVSSDPW). Residues 150-180 (SAWLPLLCALVHTISWLLIFSVLLIFDYAEL) traverse the membrane as a helical segment. Residues 181 to 207 (MGIKQVYYFCLGMGDPLSHKSPRVARL) lie on the Nuclear side of the membrane. Residues 208 to 226 (YAHLRHPIYLELLLILWAV) form a helical membrane-spanning segment. At 227–232 (PCLPPD) the chain is on the perinuclear space side. A helical membrane pass occupies residues 233–250 (RLILAIFFTLYLSLVHRL). Residues 251-285 (DVQDYAYLRSQLEKKFLLFSREEASAVGGQIRKNN) lie on the Nuclear side of the membrane.

Belongs to the nurim family.

It is found in the nucleus inner membrane. The protein is Nurim (nrm) of Xenopus laevis (African clawed frog).